The sequence spans 110 residues: Ribonuclease P protein component 4 (110 aa).

Zn(2+) is bound by residues C65, C68, C94, and C97.

This sequence belongs to the eukaryotic/archaeal RNase P protein component 4 family. Consists of a catalytic RNA component and at least 5 protein subunits. Requires Zn(2+) as cofactor.

Its subcellular location is the cytoplasm. It catalyses the reaction Endonucleolytic cleavage of RNA, removing 5'-extranucleotides from tRNA precursor.. Part of ribonuclease P, a protein complex that generates mature tRNA molecules by cleaving their 5'-ends. In Methanococcus maripaludis (strain DSM 14266 / JCM 13030 / NBRC 101832 / S2 / LL), this protein is Ribonuclease P protein component 4.